The chain runs to 369 residues: Putative agmatine deiminase (369 aa).

Cys-355 acts as the Amidino-cysteine intermediate in catalysis.

This sequence belongs to the agmatine deiminase family.

It catalyses the reaction agmatine + H2O = N-carbamoylputrescine + NH4(+). The polypeptide is Putative agmatine deiminase (Marinomonas sp. (strain MWYL1)).